Reading from the N-terminus, the 93-residue chain is Alpha-defensin 16 (93 aa).

An N-terminal signal peptide occupies residues 1-19 (MKTLILLSALVLLAFQVQA). Residues 20-58 (DPIQNTDEETKTEEQPGEEDQAVSVSFGDPEGTSLQEES) constitute a propeptide that is removed on maturation. Positions 22 to 54 (IQNTDEETKTEEQPGEEDQAVSVSFGDPEGTSL) are disordered. Disulfide bonds link C64-C92, C66-C81, and C71-C91.

It belongs to the alpha-defensin family. In terms of tissue distribution, paneth cells of the small bowel.

Its subcellular location is the secreted. Functionally, probably contributes to the antimicrobial barrier function of the small bowel mucosa. The polypeptide is Alpha-defensin 16 (Defa16) (Mus musculus (Mouse)).